We begin with the raw amino-acid sequence, 216 residues long: Dimethylamine corrinoid protein 1 (216 aa).

The B12-binding N-terminal domain occupies 1–91 (MTSKEELLQE…DMPAGTETKK (91 aa)). The 125-residue stretch at 92–216 (LGVIVNGTVE…AKAKELLVGK (125 aa)) folds into the B12-binding domain. His-105 contributes to the methylcob(III)alamin binding site.

Belongs to the methylamine corrinoid protein family.

It participates in one-carbon metabolism; methanogenesis from dimethylamine. Acts as a methyl group carrier between MtbB and MtbA. The chain is Dimethylamine corrinoid protein 1 (mtbC1) from Methanosarcina mazei (strain ATCC BAA-159 / DSM 3647 / Goe1 / Go1 / JCM 11833 / OCM 88) (Methanosarcina frisia).